The chain runs to 99 residues: Nucleoid-associated protein EbfC (99 aa).

The protein belongs to the YbaB/EbfC family. In terms of assembly, homodimer.

Its subcellular location is the cytoplasm. The protein localises to the nucleoid. Binds to DNA and alters its conformation. May be involved in regulation of gene expression, nucleoid organization and DNA protection. The protein is Nucleoid-associated protein EbfC of Borreliella burgdorferi (strain ZS7) (Borrelia burgdorferi).